The sequence spans 191 residues: Inosine triphosphate pyrophosphatase (191 aa).

12–17 (TGNANK) is an ITP binding site. E42 contacts Mg(2+). Residues K54, 70–71 (DT), K87, 145–148 (FGWD), K168, and 173–174 (HR) contribute to the ITP site.

Belongs to the HAM1 NTPase family. As to quaternary structure, homodimer. Mg(2+) serves as cofactor. It depends on Mn(2+) as a cofactor.

It is found in the cytoplasm. The catalysed reaction is ITP + H2O = IMP + diphosphate + H(+). It carries out the reaction dITP + H2O = dIMP + diphosphate + H(+). The enzyme catalyses XTP + H2O = XMP + diphosphate + H(+). Pyrophosphatase that hydrolyzes non-canonical purine nucleotides such as inosine triphosphate (ITP), deoxyinosine triphosphate (dITP) or xanthosine 5'-triphosphate (XTP) to their respective monophosphate derivatives. The enzyme does not distinguish between the deoxy- and ribose forms. Probably excludes non-canonical purines from RNA and DNA precursor pools, thus preventing their incorporation into RNA and DNA and avoiding chromosomal lesions. In Phytophthora infestans (strain T30-4) (Potato late blight agent), this protein is Inosine triphosphate pyrophosphatase.